Here is a 307-residue protein sequence, read N- to C-terminus: 4-hydroxy-3-methylbut-2-enyl diphosphate reductase (307 aa).

Cysteine 12 contacts [4Fe-4S] cluster. Positions 41 and 74 each coordinate (2E)-4-hydroxy-3-methylbut-2-enyl diphosphate. Histidine 41 and histidine 74 together coordinate dimethylallyl diphosphate. Positions 41 and 74 each coordinate isopentenyl diphosphate. Cysteine 96 contacts [4Fe-4S] cluster. Histidine 124 is a (2E)-4-hydroxy-3-methylbut-2-enyl diphosphate binding site. Histidine 124 lines the dimethylallyl diphosphate pocket. Residue histidine 124 coordinates isopentenyl diphosphate. Catalysis depends on glutamate 126, which acts as the Proton donor. Threonine 165 contacts (2E)-4-hydroxy-3-methylbut-2-enyl diphosphate. A [4Fe-4S] cluster-binding site is contributed by cysteine 195. Residues serine 223, serine 224, asparagine 225, and serine 267 each coordinate (2E)-4-hydroxy-3-methylbut-2-enyl diphosphate. Residues serine 223, serine 224, asparagine 225, and serine 267 each contribute to the dimethylallyl diphosphate site. Residues serine 223, serine 224, asparagine 225, and serine 267 each coordinate isopentenyl diphosphate.

This sequence belongs to the IspH family. [4Fe-4S] cluster serves as cofactor.

The catalysed reaction is isopentenyl diphosphate + 2 oxidized [2Fe-2S]-[ferredoxin] + H2O = (2E)-4-hydroxy-3-methylbut-2-enyl diphosphate + 2 reduced [2Fe-2S]-[ferredoxin] + 2 H(+). It carries out the reaction dimethylallyl diphosphate + 2 oxidized [2Fe-2S]-[ferredoxin] + H2O = (2E)-4-hydroxy-3-methylbut-2-enyl diphosphate + 2 reduced [2Fe-2S]-[ferredoxin] + 2 H(+). The protein operates within isoprenoid biosynthesis; dimethylallyl diphosphate biosynthesis; dimethylallyl diphosphate from (2E)-4-hydroxy-3-methylbutenyl diphosphate: step 1/1. Its pathway is isoprenoid biosynthesis; isopentenyl diphosphate biosynthesis via DXP pathway; isopentenyl diphosphate from 1-deoxy-D-xylulose 5-phosphate: step 6/6. Functionally, catalyzes the conversion of 1-hydroxy-2-methyl-2-(E)-butenyl 4-diphosphate (HMBPP) into a mixture of isopentenyl diphosphate (IPP) and dimethylallyl diphosphate (DMAPP). Acts in the terminal step of the DOXP/MEP pathway for isoprenoid precursor biosynthesis. This is 4-hydroxy-3-methylbut-2-enyl diphosphate reductase from Magnetococcus marinus (strain ATCC BAA-1437 / JCM 17883 / MC-1).